A 455-amino-acid polypeptide reads, in one-letter code: Bifunctional protein GlmU (455 aa).

The tract at residues 1–228 (MYKCALVLAA…YEETIGVNSR (228 aa)) is pyrophosphorylase. UDP-N-acetyl-alpha-D-glucosamine is bound by residues 8-11 (LAAG), lysine 22, glutamine 73, and 78-79 (GT). Aspartate 103 provides a ligand contact to Mg(2+). UDP-N-acetyl-alpha-D-glucosamine-binding residues include glycine 140, glutamate 154, asparagine 169, and asparagine 226. Asparagine 226 provides a ligand contact to Mg(2+). A linker region spans residues 229–249 (VQLAEAEEILKNRINLMHMEN). The N-acetyltransferase stretch occupies residues 250–455 (GVTLIDPRTT…GWVDKKGLKK (206 aa)). Positions 331 and 349 each coordinate UDP-N-acetyl-alpha-D-glucosamine. The active-site Proton acceptor is the histidine 361. The UDP-N-acetyl-alpha-D-glucosamine site is built by tyrosine 364 and asparagine 375. Residues 384 to 385 (NY), alanine 421, and arginine 438 each bind acetyl-CoA.

In the N-terminal section; belongs to the N-acetylglucosamine-1-phosphate uridyltransferase family. This sequence in the C-terminal section; belongs to the transferase hexapeptide repeat family. As to quaternary structure, homotrimer. It depends on Mg(2+) as a cofactor.

The protein resides in the cytoplasm. The enzyme catalyses alpha-D-glucosamine 1-phosphate + acetyl-CoA = N-acetyl-alpha-D-glucosamine 1-phosphate + CoA + H(+). It catalyses the reaction N-acetyl-alpha-D-glucosamine 1-phosphate + UTP + H(+) = UDP-N-acetyl-alpha-D-glucosamine + diphosphate. The protein operates within nucleotide-sugar biosynthesis; UDP-N-acetyl-alpha-D-glucosamine biosynthesis; N-acetyl-alpha-D-glucosamine 1-phosphate from alpha-D-glucosamine 6-phosphate (route II): step 2/2. It participates in nucleotide-sugar biosynthesis; UDP-N-acetyl-alpha-D-glucosamine biosynthesis; UDP-N-acetyl-alpha-D-glucosamine from N-acetyl-alpha-D-glucosamine 1-phosphate: step 1/1. Its pathway is bacterial outer membrane biogenesis; LPS lipid A biosynthesis. Its function is as follows. Catalyzes the last two sequential reactions in the de novo biosynthetic pathway for UDP-N-acetylglucosamine (UDP-GlcNAc). The C-terminal domain catalyzes the transfer of acetyl group from acetyl coenzyme A to glucosamine-1-phosphate (GlcN-1-P) to produce N-acetylglucosamine-1-phosphate (GlcNAc-1-P), which is converted into UDP-GlcNAc by the transfer of uridine 5-monophosphate (from uridine 5-triphosphate), a reaction catalyzed by the N-terminal domain. This Clostridium beijerinckii (strain ATCC 51743 / NCIMB 8052) (Clostridium acetobutylicum) protein is Bifunctional protein GlmU.